Here is an 88-residue protein sequence, read N- to C-terminus: Arminin 1b (88 aa).

A signal peptide spans 1–18 (MKTVLAFLFLTFIAFTHA). The propeptide occupies 19–57 (ESYEDVKEEIKNEVEREIFEDLEEESDVLESNVRELNDA). Position 85 is a valine amide (Val-85).

Belongs to the arminin family. As to expression, expressed in entodermal epithelium along the body column.

It localises to the secreted. The protein resides in the target cell membrane. Functionally, antimicrobial peptide with a broad-spectrum antimicrobial activity. Keeps its antibacterial activity under a wide range of salt concentrations that mimic physiological conditions of human blood, which is surprising, since Hydra is an obligate freshwater animal with nearly no salt tolerance. Does not affect red blood cells. The chain is Arminin 1b from Hydra vulgaris (Hydra).